A 422-amino-acid polypeptide reads, in one-letter code: ATP phosphoribosyltransferase regulatory subunit (422 aa).

The protein belongs to the class-II aminoacyl-tRNA synthetase family. HisZ subfamily. In terms of assembly, heteromultimer composed of HisG and HisZ subunits.

The protein resides in the cytoplasm. It functions in the pathway amino-acid biosynthesis; L-histidine biosynthesis; L-histidine from 5-phospho-alpha-D-ribose 1-diphosphate: step 1/9. Its function is as follows. Required for the first step of histidine biosynthesis. May allow the feedback regulation of ATP phosphoribosyltransferase activity by histidine. The polypeptide is ATP phosphoribosyltransferase regulatory subunit (Clostridium botulinum (strain Langeland / NCTC 10281 / Type F)).